The sequence spans 155 residues: Microsomal glutathione S-transferase 1 (155 aa).

Residues 3–9 (DLKQLMD) are Lumenal-facing. The chain crosses the membrane as a helical span at residues 10–33 (NEVLMAFTSYATIILAKMMFLSSA). Residues 34–62 (TAFQRLTNKVFANPEDCAGFGKGENAKKF) are Cytoplasmic-facing. Arg-38 contributes to the glutathione binding site. N6-acetyllysine occurs at positions 42, 55, and 60. Residues 63-96 (LRTDEKVERVRRAHLNDLENIVPFLGIGLLYSLS) form a helical membrane-spanning segment. Arg-73, Arg-74, His-76, and Glu-81 together coordinate glutathione. Tyr-93 is modified (3'-nitrotyrosine; in vitro). Over 97 to 99 (GPD) the chain is Lumenal. Residues 100-123 (LSTALIHFRIFVGARIYHTIAYLT) traverse the membrane as a helical segment. Tyr-121 lines the glutathione pocket. Over 124-128 (PLPQP) the chain is Cytoplasmic. Residues 129 to 148 (NRGLAFFVGYGVTLSMAYRL) traverse the membrane as a helical segment. At 149–155 (LRSRLYL) the chain is on the lumenal side.

This sequence belongs to the MAPEG family. In terms of assembly, homotrimer; The trimer binds only one molecule of glutathione. In vitro, peroxynitrite induces nitration at Tyr-93 which activates the enzyme. Highest in the liver, followed by kidney and testis and much lower in seminal vesicles, spleen, lung and brain.

Its subcellular location is the endoplasmic reticulum membrane. It localises to the mitochondrion outer membrane. It catalyses the reaction RX + glutathione = an S-substituted glutathione + a halide anion + H(+). In vitro, can be activated by reagents that attack Cys-50 sulfhydryl, such as N-ethylmaleimide and via nitration of Tyr-93 by peroxynitrite. Functionally, conjugation of reduced glutathione to a wide number of exogenous and endogenous hydrophobic electrophiles. In Rattus norvegicus (Rat), this protein is Microsomal glutathione S-transferase 1 (Mgst1).